Consider the following 1159-residue polypeptide: RNA-directed RNA polymerase (1159 aa).

A RdRp catalytic domain is found at 545–727 (LTYGVLAEDT…KALASYTGLE (183 aa)).

This sequence belongs to the reoviridae RNA-directed RNA polymerase family. As to quaternary structure, interacts with VP3 (Potential). Interacts with VP2 (Potential). Interacts with NSP5; this interaction is probably necessary for the formation of functional virus factories.

The protein resides in the virion. The enzyme catalyses RNA(n) + a ribonucleoside 5'-triphosphate = RNA(n+1) + diphosphate. Its function is as follows. RNA-directed RNA polymerase that is involved in both transcription and genome replication. Together with VP3 capping enzyme, forms an enzyme complex positioned near the channels situated at each of the five-fold vertices of the core. Following infection, the outermost layer of the virus is lost, leaving a double-layered particle (DLP) made up of the core and VP6 shell. VP1 then catalyzes the transcription of fully conservative plus-strand genomic RNAs that are extruded through the DLP's channels into the cytoplasm where they function as mRNAs for translation of viral proteins. One copy of each of the viral (+)RNAs is also recruited during core assembly, together with newly synthesized polymerase complexes and VP2. The polymerase of these novo-formed particles catalyzes the synthesis of complementary minus-strands leading to dsDNA formation. To do so, the polymerase specifically recognizes conserved 3' sequence(s) in plus-strand RNA templates. Once dsRNA synthesis is complete, the polymerase switches to the transcriptional mode, thus providing secondary transcription. This chain is RNA-directed RNA polymerase, found in Homo sapiens (Human).